The primary structure comprises 551 residues: MSVAIKMSTNTVGGQSTRQPPGSACLHCRNKKMKCDALQPRCKNCFNAGVECIRSNNYSRKRSAQRDHIEGPQDRVETSDAEVYDVQPKFNPGLFNLDFHMDSFYDMDYNFLENITPESFPILSPLDSLPSLIPSETVECSQPQTVIETAGILAPPLNDPINDLMHEDLDQLYLDRVHRLIPILHRRRYFSWTRSPNRTDAQTCLQFAMWTLATSLSTQLQHLRESFYQRTCSLLDKFTAQDTAAPQIEYAQACILIVNYDLMKENFRRGWTSAGRCIRVIQLMRLFEIDRSKGRNDREDWIQREEKRRAFWMAYSLDLFISLRGEWPLSLTGTDFVRLPALDKDFDNSHYVEMPFLGTVLSGASSSVLSPWAESIVFATIIRRITALTSELEGLSPGSSSTNVWSKIDLLRNILKSRLASLSFKHQDSHFPFSDDPMETFMIMIAQSSVLYLYNTQKSFSRATESSQNISMALQYEAQMAAQEIANLSTSILHMSRFKIHPFTPLILAKCMEFYKSNQNLDEITQAAVKQIYELLRHISKVNNIAVEYLS.

A disordered region spans residues 1–21; the sequence is MSVAIKMSTNTVGGQSTRQPP. The span at 7-20 shows a compositional bias: polar residues; it reads MSTNTVGGQSTRQP. The zn(2)-C6 fungal-type DNA-binding region spans 25–52; the sequence is CLHCRNKKMKCDALQPRCKNCFNAGVEC.

Its subcellular location is the nucleus. Its function is as follows. Transcription factor that regulates the expression of the gene cluster that mediates the biosynthesis tropolone class of fungal maleic anhydrides, including stipitaldehydic, stipitatonic and stipitatic acids. The chain is Tropolone cluster transcription factor tropK from Talaromyces stipitatus (strain ATCC 10500 / CBS 375.48 / QM 6759 / NRRL 1006) (Penicillium stipitatum).